The chain runs to 918 residues: DNA mismatch repair protein MutS (918 aa).

An ATP-binding site is contributed by 662–669 (GPNMAGKS).

Belongs to the DNA mismatch repair MutS family.

Its function is as follows. This protein is involved in the repair of mismatches in DNA. It is possible that it carries out the mismatch recognition step. This protein has a weak ATPase activity. This chain is DNA mismatch repair protein MutS, found in Sorangium cellulosum (strain So ce56) (Polyangium cellulosum (strain So ce56)).